The chain runs to 583 residues: 2-succinyl-5-enolpyruvyl-6-hydroxy-3-cyclohexene-1-carboxylate synthase (583 aa).

Belongs to the TPP enzyme family. MenD subfamily. As to quaternary structure, homodimer. Requires Mg(2+) as cofactor. Mn(2+) serves as cofactor. It depends on thiamine diphosphate as a cofactor.

It carries out the reaction isochorismate + 2-oxoglutarate + H(+) = 5-enolpyruvoyl-6-hydroxy-2-succinyl-cyclohex-3-ene-1-carboxylate + CO2. The protein operates within quinol/quinone metabolism; 1,4-dihydroxy-2-naphthoate biosynthesis; 1,4-dihydroxy-2-naphthoate from chorismate: step 2/7. It functions in the pathway quinol/quinone metabolism; menaquinone biosynthesis. Catalyzes the thiamine diphosphate-dependent decarboxylation of 2-oxoglutarate and the subsequent addition of the resulting succinic semialdehyde-thiamine pyrophosphate anion to isochorismate to yield 2-succinyl-5-enolpyruvyl-6-hydroxy-3-cyclohexene-1-carboxylate (SEPHCHC). The chain is 2-succinyl-5-enolpyruvyl-6-hydroxy-3-cyclohexene-1-carboxylate synthase from Chlorobium phaeovibrioides (strain DSM 265 / 1930) (Prosthecochloris vibrioformis (strain DSM 265)).